We begin with the raw amino-acid sequence, 514 residues long: Alpha-amylase (514 aa).

A signal peptide spans 1–31; it reads MIQKRKRTVSFRLVLMCTLLFVSLPITKTSA. The Ca(2+) site is built by Asn-133, Asp-190, Ala-212, Asp-214, Asp-225, Asp-231, Asp-233, and Asp-235. Asp-190 serves as a coordination point for Na(+). Na(+) contacts are provided by Asp-214, Asp-225, and Asp-231. Asp-262 serves as the catalytic Nucleophile. Position 266 (His-266) interacts with Ca(2+). Catalysis depends on Glu-292, which acts as the Proton donor. 3 residues coordinate Ca(2+): Gly-331, Asp-438, and Asp-461.

This sequence belongs to the glycosyl hydrolase 13 family. Monomer. Ca(2+) serves as cofactor. Requires Na(+) as cofactor.

It is found in the secreted. It catalyses the reaction Endohydrolysis of (1-&gt;4)-alpha-D-glucosidic linkages in polysaccharides containing three or more (1-&gt;4)-alpha-linked D-glucose units.. This chain is Alpha-amylase, found in Bacillus amyloliquefaciens (Bacillus velezensis).